Reading from the N-terminus, the 143-residue chain is UPF0225 protein Reut_A0143 (143 aa).

It belongs to the UPF0225 family.

The polypeptide is UPF0225 protein Reut_A0143 (Cupriavidus pinatubonensis (strain JMP 134 / LMG 1197) (Cupriavidus necator (strain JMP 134))).